Here is a 179-residue protein sequence, read N- to C-terminus: Peptide methionine sulfoxide reductase MsrA (179 aa).

Cys-14 is an active-site residue.

This sequence belongs to the MsrA Met sulfoxide reductase family.

It catalyses the reaction L-methionyl-[protein] + [thioredoxin]-disulfide + H2O = L-methionyl-(S)-S-oxide-[protein] + [thioredoxin]-dithiol. The catalysed reaction is [thioredoxin]-disulfide + L-methionine + H2O = L-methionine (S)-S-oxide + [thioredoxin]-dithiol. Has an important function as a repair enzyme for proteins that have been inactivated by oxidation. Catalyzes the reversible oxidation-reduction of methionine sulfoxide in proteins to methionine. In Nitrobacter winogradskyi (strain ATCC 25391 / DSM 10237 / CIP 104748 / NCIMB 11846 / Nb-255), this protein is Peptide methionine sulfoxide reductase MsrA.